A 1124-amino-acid polypeptide reads, in one-letter code: Transient-receptor-potential-like protein (1124 aa).

The segment at Met-1–Ser-24 is disordered. Residues Met-1–Lys-340 lie on the Cytoplasmic side of the membrane. Over residues Gly-10–Ala-21 the composition is skewed to low complexity. ANK repeat units lie at residues Leu-40–His-69, Leu-78–Asp-107, and Pro-152–Val-181. The helical transmembrane segment at Val-341–Ala-361 threads the bilayer. Over Pro-362–Pro-373 the chain is Extracellular. A helical membrane pass occupies residues Phe-374–Val-394. Topologically, residues Ser-395–Glu-431 are cytoplasmic. A helical membrane pass occupies residues Leu-432–Val-452. Topologically, residues Gly-453–Leu-512 are extracellular. Residues Ile-513–Phe-533 traverse the membrane as a helical segment. Topologically, residues Ser-534–Arg-548 are cytoplasmic. Residues Met-549 to Cys-569 form a helical membrane-spanning segment. The Extracellular portion of the chain corresponds to Gly-570–Gly-645. The helical transmembrane segment at Leu-646 to Ala-666 threads the bilayer. Over Met-667–Asn-1124 the chain is Cytoplasmic. Calmodulin-binding regions lie at residues Ser-710 to Gln-728 and Ile-853 to Gly-895. Disordered regions lie at residues Arg-978–His-1013 and Leu-1031–Asn-1124. The segment covering Ser-1035 to Pro-1063 has biased composition (low complexity). Composition is skewed to basic and acidic residues over residues Gly-1069 to Arg-1081 and His-1090 to Val-1106. A compositionally biased stretch (polar residues) spans Ser-1107–Gln-1118.

This sequence belongs to the transient receptor (TC 1.A.4) family. STrpC subfamily. In terms of assembly, forms heteromultimers with Trpgamma and, to a lower extent, with trp. Interacts with Fkbp59 in vivo and is found in the inaD signaling complex. As to expression, expressed predominantly in the rhabdomeres of photoreceptor cells.

Its subcellular location is the membrane. It localises to the cell projection. The protein resides in the rhabdomere membrane. Its function is as follows. A light-sensitive calcium channel that is required for inositide-mediated Ca(2+) entry in the retina during phospholipase C (PLC)-mediated phototransduction. Required for vision in the dark and in dim light. Binds calmodulin. Trp and trpl act together in the light response, although it is unclear whether as heteromultimers or distinct units. Also forms a functional cation channel with Trpgamma. Activated by fatty acids, metabolic stress, inositols and GTP-binding proteins. The polypeptide is Transient-receptor-potential-like protein (trpl) (Drosophila melanogaster (Fruit fly)).